Here is a 1032-residue protein sequence, read N- to C-terminus: MKLGNPFVFRPGPVSFWTTIVYLAIIIPLIYVQETVPPAPSEKELPQGVNLTEAWLDLEVITRSYHPFNSHSNDIVREYLMRRSRDILERNGIDYTTDLTGGVPWESRYLSSAEHPVQAAEVSARPRGATLFDDRISNVTMTNPQPNNTMGRYFEGNNFYVYIHGSEDPEGDWWTSDNVQRVARNGAGVLVNCHFDSVSTGYGATDDGMACISLLQLLSHFTSEGHQPKNGIVLLFNNAEEDGLFGAQAFGYSPLVQFCNTFVNLEGAGAGGRAMLFRTTDLEAAEAYSKSPHPFGSVVASNAFERGVIKSGTDYSVFVDNYGQRGLDIAFYSPRSRYHTEEDDARHTSVDSIWHMLSAALATTESLARTTSTQFNGPRSDGRKDLVQSGRPTAGVWFDWYGSSWSAFALRGLFAWTLTLLITTPLVLFVVTYLLVRDDKWYFFATKVDSTVGDGEETVSFGGWKGFVRFPFALVVATALTIGSVFLLAKVNPLIIYSSGYSVWAMMISLFYFVSWLLLRGAHFVRPSALQRGFTLIWLFIITWVLSVFAAVAEDRMNMGAVYPLAFLHTFAFAAVLISLLEQYALPAKQDFARQVSGENEEEEEQEQENLLGDGGNDANEQNNEDRGDTDIAATPTETTPLRAGEEGHGSSEQTTTFANTYRRPVPETRVETRSGNNRKRSFPPYENEQAWSGRLPTWTWFIQLLLLVPLYVTVLGNLALVQTTSIGKTGTDGSSLLAPLMGVGILAILLLLPLTPFIHRVSHHVPLFLFLVFIGTLIYNLTAFPFSDNNRFKFYFKQVVDLDKGSNVVTLNGLEEFVRPVISSIPTPAGQRIHCDEDPFLSNLRNCQYDASLLPPDVADGEELESLISIEASKSKNGKTILVSLDALNTRVCYLDTSFPIFGFSVHGGAKRDDRFGSFPPEGLQQIQLWRRDWEKGWNVTLHLGGHVLPMNEDSVEATEVDEVDDDPSGGELKRGAAKELIVTARCAWSDANSANTIPAFHEVKQFMPRWAIVAKKTVGLVEITKKIKVA.

Residues 1 to 11 (MKLGNPFVFRP) lie on the Cytoplasmic side of the membrane. A helical transmembrane segment spans residues 12–32 (GPVSFWTTIVYLAIIIPLIYV). The Vacuolar segment spans residues 33–415 (QETVPPAPSE…SAFALRGLFA (383 aa)). N-linked (GlcNAc...) asparagine glycans are attached at residues N50, N138, and N147. Positions 194 and 206 each coordinate Zn(2+). E240 serves as the catalytic Proton acceptor. Zn(2+) is bound by residues E241, E266, and H339. The helical transmembrane segment at 416-436 (WTLTLLITTPLVLFVVTYLLV) threads the bilayer. The Cytoplasmic portion of the chain corresponds to 437 to 469 (RDDKWYFFATKVDSTVGDGEETVSFGGWKGFVR). Residues 470-490 (FPFALVVATALTIGSVFLLAK) traverse the membrane as a helical segment. The Vacuolar portion of the chain corresponds to 491 to 493 (VNP). A helical membrane pass occupies residues 494 to 514 (LIIYSSGYSVWAMMISLFYFV). At 515 to 532 (SWLLLRGAHFVRPSALQR) the chain is on the cytoplasmic side. The helical transmembrane segment at 533-553 (GFTLIWLFIITWVLSVFAAVA) threads the bilayer. Residues 554 to 560 (EDRMNMG) lie on the Vacuolar side of the membrane. Residues 561–581 (AVYPLAFLHTFAFAAVLISLL) traverse the membrane as a helical segment. The Cytoplasmic segment spans residues 582–701 (EQYALPAKQD…WSGRLPTWTW (120 aa)). The tract at residues 595-688 (QVSGENEEEE…RKRSFPPYEN (94 aa)) is disordered. A compositionally biased stretch (acidic residues) spans 599-608 (ENEEEEEQEQ). Polar residues predominate over residues 651–660 (SSEQTTTFAN). The chain crosses the membrane as a helical span at residues 702–722 (FIQLLLLVPLYVTVLGNLALV). Over 723 to 738 (QTTSIGKTGTDGSSLL) the chain is Vacuolar. The chain crosses the membrane as a helical span at residues 739–759 (APLMGVGILAILLLLPLTPFI). Over 760 to 766 (HRVSHHV) the chain is Cytoplasmic. Residues 767–787 (PLFLFLVFIGTLIYNLTAFPF) form a helical membrane-spanning segment. At 788-1032 (SDNNRFKFYF…VEITKKIKVA (245 aa)) the chain is on the vacuolar side. A glycan (N-linked (GlcNAc...) asparagine) is linked at N940.

It belongs to the peptidase M28 family. The cofactor is Zn(2+).

Its subcellular location is the vacuole membrane. Its function is as follows. May be involved in vacuolar sorting and osmoregulation. The chain is Vacuolar membrane protease from Metarhizium robertsii (strain ARSEF 23 / ATCC MYA-3075) (Metarhizium anisopliae (strain ARSEF 23)).